Reading from the N-terminus, the 354-residue chain is Selenide, water dikinase (354 aa).

Cysteine 23 is an active-site residue. ATP contacts are provided by residues lysine 26 and 54–56 (TSD). A Mg(2+)-binding site is contributed by aspartate 57. ATP is bound by residues aspartate 74, aspartate 97, and 145–147 (GHS). Aspartate 97 contributes to the Mg(2+) binding site. Residue aspartate 233 participates in Mg(2+) binding.

It belongs to the selenophosphate synthase 1 family. Class I subfamily. Homodimer. It depends on Mg(2+) as a cofactor.

The catalysed reaction is hydrogenselenide + ATP + H2O = selenophosphate + AMP + phosphate + 2 H(+). Functionally, synthesizes selenophosphate from selenide and ATP. The chain is Selenide, water dikinase from Burkholderia cenocepacia (strain ATCC BAA-245 / DSM 16553 / LMG 16656 / NCTC 13227 / J2315 / CF5610) (Burkholderia cepacia (strain J2315)).